A 296-amino-acid chain; its full sequence is 4-hydroxy-tetrahydrodipicolinate synthase (296 aa).

Residue Thr49 participates in pyruvate binding. Tyr137 serves as the catalytic Proton donor/acceptor. Lys166 functions as the Schiff-base intermediate with substrate in the catalytic mechanism. Val208 lines the pyruvate pocket.

The protein belongs to the DapA family. Homotetramer; dimer of dimers.

The protein resides in the cytoplasm. The enzyme catalyses L-aspartate 4-semialdehyde + pyruvate = (2S,4S)-4-hydroxy-2,3,4,5-tetrahydrodipicolinate + H2O + H(+). It functions in the pathway amino-acid biosynthesis; L-lysine biosynthesis via DAP pathway; (S)-tetrahydrodipicolinate from L-aspartate: step 3/4. In terms of biological role, catalyzes the condensation of (S)-aspartate-beta-semialdehyde [(S)-ASA] and pyruvate to 4-hydroxy-tetrahydrodipicolinate (HTPA). In Desulforamulus reducens (strain ATCC BAA-1160 / DSM 100696 / MI-1) (Desulfotomaculum reducens), this protein is 4-hydroxy-tetrahydrodipicolinate synthase.